The chain runs to 507 residues: ATP synthase subunit alpha, chloroplastic (507 aa).

170–177 (GDRQTGKT) contributes to the ATP binding site.

Belongs to the ATPase alpha/beta chains family. In terms of assembly, F-type ATPases have 2 components, CF(1) - the catalytic core - and CF(0) - the membrane proton channel. CF(1) has five subunits: alpha(3), beta(3), gamma(1), delta(1), epsilon(1). CF(0) has four main subunits: a, b, b' and c.

Its subcellular location is the plastid. The protein localises to the chloroplast thylakoid membrane. It catalyses the reaction ATP + H2O + 4 H(+)(in) = ADP + phosphate + 5 H(+)(out). Its function is as follows. Produces ATP from ADP in the presence of a proton gradient across the membrane. The alpha chain is a regulatory subunit. In Morus indica (Mulberry), this protein is ATP synthase subunit alpha, chloroplastic.